Reading from the N-terminus, the 298-residue chain is 4-hydroxy-tetrahydrodipicolinate synthase (298 aa).

Residue Thr48 coordinates pyruvate. Catalysis depends on Tyr137, which acts as the Proton donor/acceptor. Lys166 serves as the catalytic Schiff-base intermediate with substrate. Residue Ile207 participates in pyruvate binding.

This sequence belongs to the DapA family. In terms of assembly, homotetramer; dimer of dimers.

It is found in the cytoplasm. The catalysed reaction is L-aspartate 4-semialdehyde + pyruvate = (2S,4S)-4-hydroxy-2,3,4,5-tetrahydrodipicolinate + H2O + H(+). Its pathway is amino-acid biosynthesis; L-lysine biosynthesis via DAP pathway; (S)-tetrahydrodipicolinate from L-aspartate: step 3/4. Its function is as follows. Catalyzes the condensation of (S)-aspartate-beta-semialdehyde [(S)-ASA] and pyruvate to 4-hydroxy-tetrahydrodipicolinate (HTPA). The chain is 4-hydroxy-tetrahydrodipicolinate synthase from Campylobacter jejuni subsp. jejuni serotype O:23/36 (strain 81-176).